The primary structure comprises 199 residues: 7-methyl-GTP pyrophosphatase (199 aa).

Residue D74 is the Proton acceptor of the active site.

This sequence belongs to the Maf family. YceF subfamily. The cofactor is a divalent metal cation.

It localises to the cytoplasm. The catalysed reaction is N(7)-methyl-GTP + H2O = N(7)-methyl-GMP + diphosphate + H(+). Nucleoside triphosphate pyrophosphatase that hydrolyzes 7-methyl-GTP (m(7)GTP). May have a dual role in cell division arrest and in preventing the incorporation of modified nucleotides into cellular nucleic acids. This is 7-methyl-GTP pyrophosphatase from Albidiferax ferrireducens (strain ATCC BAA-621 / DSM 15236 / T118) (Rhodoferax ferrireducens).